We begin with the raw amino-acid sequence, 718 residues long: Tegument protein UL46 (718 aa).

2 disordered regions span residues 433 to 510 (SAGP…EPPA) and 581 to 611 (TADDDDDDARRKATHAASARERHAPYEDDES). Residues 444–454 (GPGGHRAGGGT) show a composition bias toward gly residues. A compositionally biased stretch (basic and acidic residues) spans 455–467 (CREKIQRARRDNE).

This sequence belongs to the herpesviridae HHV-1 VP11/12 protein family. Interacts with VP16. Interacts with host LCK, PIK3R1, SHC1 AND GRB2; these interactions promote the activation of the PI3K/AKT pathway. Interacts with host YWHAB. Interacts with ICP0; this interaction targets UL46 for degradation by the proteasome. Interacts (via N-terminus) with host TMEM173. Interacts (via C-terminus) with host TBK1. Interacts with host DOK2. Post-translationally, phosphorylated by host LCK. The phosphorylation seems to be lymphocyte-specific.

It is found in the virion tegument. It localises to the host cytoplasm. Its subcellular location is the host cell membrane. Functionally, plays a role in the activation of the host PI3K/AKT pathway to promote cell survival. Interacts with and activates host LCK and thereby recruits downstream partners SHC1, GRB2 and PI3KR1 in order to activate the PI3K pathway by phosphorylating host AKT on its activating residues. This mechanism is inhibited by the viral protein US3 that instead promotes incorporation of UL46 into virions. Plays a role in the inhibition of TMEM173/STING-mediated type I interferon production. Interacts with host DOK2 and induces its degradation. This immune evasion mechanism to inactivate T-cells may play an important role during pathogenesis. The polypeptide is Tegument protein UL46 (Homo sapiens (Human)).